Here is a 298-residue protein sequence, read N- to C-terminus: MFKGILVSLLASFLFGYMYYFSTLLKPLSGTDIFGYRMIFTFPFVLLSVTLFKQKAALIERLKRIQKRPHLALSYLLCGLLMGFQMWLFLWAPNNGSSLSVSFGYLLLPIVMVAAGRVFFKERISTFKFIAVIIATLGVISNIVLKGGLSWEAIVICLGYTAYFSIRKALKNTDLASFCLEMLSLMPVSIYFALQTDFATVQQTNPFIWGXLVLLGLISGTALIAYVIASNMLPMNLLGLLGYVETIMMLCVSFLIGEQIDSESYPLFICLVIAMILVMVDGVYKHTQKEVYKCHLKK.

10 helical membrane passes run 5–23 (ILVSLLASFLFGYMYYFST), 33–52 (IFGYRMIFTFPFVLLSVTLF), 72–91 (ALSYLLCGLLMGFQMWLFLW), 101–120 (VSFGYLLLPIVMVAAGRVFF), 127–145 (FKFIAVIIATLGVISNIVL), 149–166 (LSWEAIVICLGYTAYFSI), 175–194 (LASFCLEMLSLMPVSIYFAL), 207–229 (FIWGXLVLLGLISGTALIAYVIA), 238–260 (LGLLGYVETIMMLCVSFLIGEQI), and 265–284 (YPLFICLVIAMILVMVDGVY). Positions 13-144 (FLFGYMYYFS…ATLGVISNIV (132 aa)) constitute an EamA domain.

Belongs to the EamA transporter family.

The protein resides in the cell membrane. This is an uncharacterized protein from Haemophilus influenzae (strain ATCC 51907 / DSM 11121 / KW20 / Rd).